We begin with the raw amino-acid sequence, 276 residues long: Large ribosomal subunit protein uL2 (276 aa).

Residues 223 to 276 are disordered; it reads GSAMNPVDHPHGGGEGKAPIGHPGPLTPWGKPTLGYKTRKKNKPSDKFIVKRRK. Residues 265-276 show a composition bias toward basic and acidic residues; sequence KPSDKFIVKRRK.

Belongs to the universal ribosomal protein uL2 family. Part of the 50S ribosomal subunit. Forms a bridge to the 30S subunit in the 70S ribosome.

Functionally, one of the primary rRNA binding proteins. Required for association of the 30S and 50S subunits to form the 70S ribosome, for tRNA binding and peptide bond formation. It has been suggested to have peptidyltransferase activity; this is somewhat controversial. Makes several contacts with the 16S rRNA in the 70S ribosome. This is Large ribosomal subunit protein uL2 from Caldicellulosiruptor saccharolyticus (strain ATCC 43494 / DSM 8903 / Tp8T 6331).